A 181-amino-acid polypeptide reads, in one-letter code: Photosystem I assembly protein Ycf4 (181 aa).

2 helical membrane passes run 19–39 (YFWA…GISS) and 62–82 (VMMF…LTII).

It belongs to the Ycf4 family.

It localises to the plastid. It is found in the chloroplast thylakoid membrane. In terms of biological role, seems to be required for the assembly of the photosystem I complex. This is Photosystem I assembly protein Ycf4 from Phaeodactylum tricornutum (strain CCAP 1055/1).